Reading from the N-terminus, the 227-residue chain is Enolase-phosphatase E1 (227 aa).

Residues D12 and E14 each contribute to the Mg(2+) site. Residues 118 to 119 (SS) and K159 each bind substrate. D186 is a Mg(2+) binding site.

The protein belongs to the HAD-like hydrolase superfamily. MasA/MtnC family. In terms of assembly, monomer. Mg(2+) is required as a cofactor.

It localises to the cytoplasm. It is found in the nucleus. It catalyses the reaction 5-methylsulfanyl-2,3-dioxopentyl phosphate + H2O = 1,2-dihydroxy-5-(methylsulfanyl)pent-1-en-3-one + phosphate. The protein operates within amino-acid biosynthesis; L-methionine biosynthesis via salvage pathway; L-methionine from S-methyl-5-thio-alpha-D-ribose 1-phosphate: step 3/6. It functions in the pathway amino-acid biosynthesis; L-methionine biosynthesis via salvage pathway; L-methionine from S-methyl-5-thio-alpha-D-ribose 1-phosphate: step 4/6. Bifunctional enzyme that catalyzes the enolization of 2,3-diketo-5-methylthiopentyl-1-phosphate (DK-MTP-1-P) into the intermediate 2-hydroxy-3-keto-5-methylthiopentenyl-1-phosphate (HK-MTPenyl-1-P), which is then dephosphorylated to form the acireductone 1,2-dihydroxy-3-keto-5-methylthiopentene (DHK-MTPene). The chain is Enolase-phosphatase E1 from Vanderwaltozyma polyspora (strain ATCC 22028 / DSM 70294 / BCRC 21397 / CBS 2163 / NBRC 10782 / NRRL Y-8283 / UCD 57-17) (Kluyveromyces polysporus).